We begin with the raw amino-acid sequence, 263 residues long: Polyglutamine-binding protein 1 (263 aa).

Residues glutamate 46–aspartate 80 form the WW domain. The tract at residues asparagine 94–aspartate 263 is disordered. The span at alanine 99–aspartate 173 shows a compositional bias: basic and acidic residues. The stretch at aspartate 104–valine 110 is one 1-1; approximate repeat. The interval aspartate 104 to asparagine 138 is 5 X 7 AA approximate tandem repeats of D-R-[NS]-H-E-K-S. Residues aspartate 111 to serine 117 form a 1-2 repeat. A 1-3; approximate repeat occupies aspartate 118–proline 124. The stretch at aspartate 125–alanine 131 is one 1-4; approximate repeat. The 1-5; approximate repeat unit spans residues aspartate 132–asparagine 138. 9 tandem repeats follow at residues aspartate 139–arginine 140, glutamate 141–arginine 142, glutamate 143–arginine 144, aspartate 150–arginine 151, glutamate 152–arginine 153, aspartate 154–arginine 155, aspartate 156–arginine 157, glutamate 158–arginine 159, and glutamate 160–arginine 161. The tract at residues aspartate 139 to arginine 144 is 3 X 2 AA tandem repeats of [DE]-R. Positions aspartate 150–arginine 161 are 6 X 2 AA tandem repeats of [DE]-R. The interval tyrosine 243 to asparagine 253 is important for interaction with TXNL4A. The residue at position 245 (serine 245) is a Phosphoserine.

In terms of assembly, interacts with POU3F2/Brn-2, ATXN1, TXNL4A, HTT and AR. Interaction with ATXN1 correlates positively with the length of the polyglutamine tract. Interacts with RNA polymerase II large subunit in a phosphorylation-dependent manner. Forms a ternary complex with ATXN1 mutant and phosphorylated RNA polymerase II. Interacts (via C-terminus) with TXNL4A and CD2BP2. Interacts (via WW domain) with ATN1 and SF3B1, and may interact with additional splice factors. Interacts (via WW domain) with WBP11; Leading to reduce interaction between PQBP1 and TXNL4A. Interacts with CAPRIN1. Interacts with DDX1. Interacts with SFPQ. Interacts with KHSRP. In terms of tissue distribution, detected in brain cortex and hippocampus neurons (at protein level). Expressed in brain with high level in cerebellar cortex, hippocampus and olfactory bulb.

The protein localises to the nucleus. It localises to the nucleus speckle. It is found in the cytoplasmic granule. Intrinsically disordered protein that acts as a scaffold, and which is involved in different processes, such as pre-mRNA splicing, transcription regulation, innate immunity and neuron development. Interacts with splicing-related factors via the intrinsically disordered region and regulates alternative splicing of target pre-mRNA species. May suppress the ability of POU3F2 to transactivate the DRD1 gene in a POU3F2 dependent manner. Can activate transcription directly or via association with the transcription machinery. May be involved in ATXN1 mutant-induced cell death. The interaction with ATXN1 mutant reduces levels of phosphorylated RNA polymerase II large subunit. Involved in the assembly of cytoplasmic stress granule, possibly by participating in the transport of neuronal RNA granules. Also acts as an innate immune sensor of infection by retroviruses, by detecting the presence of reverse-transcribed DNA in the cytosol. Directly binds retroviral reverse-transcribed DNA in the cytosol and interacts with CGAS, leading to activate the cGAS-STING signaling pathway, triggering type-I interferon production. This is Polyglutamine-binding protein 1 (Pqbp1) from Mus musculus (Mouse).